Reading from the N-terminus, the 175-residue chain is Alpha-crystallin B chain (175 aa).

Met1 bears the N-acetylmethionine mark. Phosphoserine is present on Ser19. Ser41 carries an O-linked (GlcNAc) serine glycan. Phosphoserine occurs at positions 45 and 59. The sHSP domain maps to 56 to 164 (RAPSWIDTGL…PERTIPITRE (109 aa)). His83 serves as a coordination point for Zn(2+). Position 92 is an N6-acetyllysine (Lys92). Residues His104, Glu106, His111, and His119 each contribute to the Zn(2+) site. The disordered stretch occupies residues 139-175 (SDGVLTMNGPRKQASGPERTIPITREEKPAVTAAPKK). N6-acetyllysine is present on Lys166. The O-linked (GlcNAc) threonine glycan is linked to Thr170.

Belongs to the small heat shock protein (HSP20) family. Heteromer composed of three CRYAA and one CRYAB subunits. Aggregates with homologous proteins, including the small heat shock protein HSPB1, to form large heteromeric complexes. Inter-subunit bridging via zinc ions enhances stability, which is crucial as there is no protein turn over in the lens. Interacts with HSPBAP1 and TTN/titin. Interacts with TMEM109; in the cellular response to DNA damage. Interacts with DES; binds rapidly during early stages of DES filament assembly and a reduced binding seen in the later stages. Interacts with ATP6V1A and with MTOR, forming a ternary complex.

It is found in the cytoplasm. It localises to the nucleus. Its subcellular location is the secreted. The protein localises to the lysosome. Functionally, may contribute to the transparency and refractive index of the lens. Has chaperone-like activity, preventing aggregation of various proteins under a wide range of stress conditions. In lens epithelial cells, stabilizes the ATP6V1A protein, preventing its degradation by the proteasome. The polypeptide is Alpha-crystallin B chain (CRYAB) (Ovis aries (Sheep)).